The chain runs to 121 residues: MDLIRKIEAQNKKNEAFVFNVGDTVRVVYKIIEGSNERLQSFEGIVISFQNKGIGKTFLIRKISSGIGVEKIFPVYSPIIEKVEVLRRGKVRRAKLYYMRNRIGKAAMKIKERLTIKKVKH.

The protein belongs to the bacterial ribosomal protein bL19 family.

This protein is located at the 30S-50S ribosomal subunit interface and may play a role in the structure and function of the aminoacyl-tRNA binding site. This Borreliella burgdorferi (strain ATCC 35210 / DSM 4680 / CIP 102532 / B31) (Borrelia burgdorferi) protein is Large ribosomal subunit protein bL19 (rplS).